We begin with the raw amino-acid sequence, 123 residues long: Large ribosomal subunit protein bL12 (123 aa).

It belongs to the bacterial ribosomal protein bL12 family. As to quaternary structure, homodimer. Part of the ribosomal stalk of the 50S ribosomal subunit. Forms a multimeric L10(L12)X complex, where L10 forms an elongated spine to which 2 to 4 L12 dimers bind in a sequential fashion. Binds GTP-bound translation factors.

Its function is as follows. Forms part of the ribosomal stalk which helps the ribosome interact with GTP-bound translation factors. Is thus essential for accurate translation. In Maricaulis maris (strain MCS10) (Caulobacter maris), this protein is Large ribosomal subunit protein bL12.